The sequence spans 245 residues: 14-3-3 protein zeta/delta (245 aa).

An N-acetylmethionine modification is found at methionine 1. Lysine 3 carries the N6-acetyllysine modification. Residue serine 58 is modified to Phosphoserine; by PKA. Lysine 68 carries the N6-acetyllysine modification. A phosphoserine mark is found at serine 184, serine 207, and serine 210. Threonine 232 is modified (phosphothreonine; by CK1).

Belongs to the 14-3-3 family. As to quaternary structure, homodimer. Heterodimerizes with YWHAE. Homo- and heterodimerization is inhibited by phosphorylation on Ser-58. Interacts with FOXO4, NOXA1, SSH1 ARHGEF2, CDK16 and BSPRY. Interacts with WEE1 (C-terminal). Interacts with MLF1 (phosphorylated form); the interaction retains it in the cytoplasm. Interacts with BAX; the interaction occurs in the cytoplasm. Under stress conditions, MAPK8-mediated phosphorylation releases BAX to mitochondria. Interacts with TP53; the interaction enhances p53 transcriptional activity. The Ser-58 phosphorylated form inhibits this interaction and p53 transcriptional activity. Interacts with ABL1 (phosphorylated form); the interaction retains ABL1 in the cytoplasm. Interacts with PKA-phosphorylated AANAT; the interaction modulates AANAT enzymatic activity by increasing affinity for arylalkylamines and acetyl-CoA and protecting the enzyme from dephosphorylation and proteasomal degradation. It may also prevent thiol-dependent inactivation. Interacts with AKT1; the interaction phosphorylates YWHAZ and modulates dimerization. Interacts with GAB2. Interacts with BCL2L11, SAMSN1 and TLK2. Interacts with phosphorylated RAF1; the interaction is inhibited when YWHAZ is phosphorylated on Thr-232. Interacts with Thr-phosphorylated ITGB2. Interacts with the 'Thr-369' phosphorylated form of DAPK2. Interacts with PI4KB, TBC1D22A and TBC1D22B. Interacts with ZFP36L1 (via phosphorylated form); this interaction occurs in a p38 MAPK- and AKT-signaling pathways. Interacts with SLITRK1. Interacts with AK5, LDB1, MADD, MARK3, PDE1A and SMARCB1. Interacts with YWHAZ. Interacts with MEFV. Interacts with ADAM22 (via C-terminus). In terms of processing, the delta, brain-specific form differs from the zeta form in being phosphorylated. Phosphorylation on Ser-184 by MAPK8; promotes dissociation of BAX and translocation of BAX to mitochondria. Phosphorylation on Thr-232; inhibits binding of RAF1. Phosphorylated on Ser-58 by PKA and protein kinase C delta type catalytic subunit in a sphingosine-dependent fashion. Phosphorylation on Ser-58 by PKA; disrupts homodimerization and heterodimerization with YHAE and TP53.

It is found in the cytoplasm. It localises to the melanosome. Its function is as follows. Adapter protein implicated in the regulation of a large spectrum of both general and specialized signaling pathways. Binds to a large number of partners, usually by recognition of a phosphoserine or phosphothreonine motif. Binding generally results in the modulation of the activity of the binding partner. Promotes cytosolic retention and inactivation of TFEB transcription factor by binding to phosphorylated TFEB. Induces ARHGEF7 activity on RAC1 as well as lamellipodia and membrane ruffle formation. In neurons, regulates spine maturation through the modulation of ARHGEF7 activity. The chain is 14-3-3 protein zeta/delta (YWHAZ) from Bos taurus (Bovine).